Consider the following 425-residue polypeptide: Tyrosine--tRNA ligase (425 aa).

Tyrosine 37 is a binding site for L-tyrosine. The 'HIGH' region motif lies at 42-51; it reads PTADSLHLGH. The L-tyrosine site is built by tyrosine 174 and glutamine 178. The 'KMSKS' region signature appears at 234 to 238; that stretch reads KFGKS. Lysine 237 provides a ligand contact to ATP. In terms of domain architecture, S4 RNA-binding spans 357-422; the sequence is DGLIDALAAS…RGKKLYALLV (66 aa).

Belongs to the class-I aminoacyl-tRNA synthetase family. TyrS type 1 subfamily. As to quaternary structure, homodimer.

Its subcellular location is the cytoplasm. The catalysed reaction is tRNA(Tyr) + L-tyrosine + ATP = L-tyrosyl-tRNA(Tyr) + AMP + diphosphate + H(+). Catalyzes the attachment of tyrosine to tRNA(Tyr) in a two-step reaction: tyrosine is first activated by ATP to form Tyr-AMP and then transferred to the acceptor end of tRNA(Tyr). In Laribacter hongkongensis (strain HLHK9), this protein is Tyrosine--tRNA ligase.